The following is a 103-amino-acid chain: Phosphoribosyl-ATP pyrophosphatase (103 aa).

It belongs to the PRA-PH family.

Its subcellular location is the cytoplasm. The catalysed reaction is 1-(5-phospho-beta-D-ribosyl)-ATP + H2O = 1-(5-phospho-beta-D-ribosyl)-5'-AMP + diphosphate + H(+). It participates in amino-acid biosynthesis; L-histidine biosynthesis; L-histidine from 5-phospho-alpha-D-ribose 1-diphosphate: step 2/9. The protein is Phosphoribosyl-ATP pyrophosphatase of Listeria monocytogenes serotype 4b (strain CLIP80459).